Here is a 446-residue protein sequence, read N- to C-terminus: uncharacterized protein (446 aa).

Transmembrane regions (helical) follow at residues 20-40 (LIGV…IAIV), 42-62 (SGFS…FVFE), 95-115 (WVYW…ISLF), 127-147 (VFAS…LSVF), 160-180 (AAIF…LSGG), 205-225 (LIYA…AVHL), 237-257 (LMLA…LLLV), 284-304 (IFNG…LFAV), 331-351 (WPAL…SLVL), 355-375 (IYEH…LFIL), 388-408 (GKTQ…GTLF), and 414-434 (PGFF…MIYQ).

The protein belongs to the amino acid-polyamine-organocation (APC) superfamily.

It localises to the cell membrane. This is an uncharacterized protein from Bacillus subtilis (strain 168).